The primary structure comprises 330 residues: Phosphate acyltransferase (330 aa).

It belongs to the PlsX family. Homodimer. Probably interacts with PlsY.

It is found in the cytoplasm. The enzyme catalyses a fatty acyl-[ACP] + phosphate = an acyl phosphate + holo-[ACP]. The protein operates within lipid metabolism; phospholipid metabolism. In terms of biological role, catalyzes the reversible formation of acyl-phosphate (acyl-PO(4)) from acyl-[acyl-carrier-protein] (acyl-ACP). This enzyme utilizes acyl-ACP as fatty acyl donor, but not acyl-CoA. The chain is Phosphate acyltransferase from Streptococcus pneumoniae (strain P1031).